The chain runs to 98 residues: Large ribosomal subunit protein uL23 (98 aa).

Belongs to the universal ribosomal protein uL23 family. In terms of assembly, part of the 50S ribosomal subunit. Contacts protein L29, and trigger factor when it is bound to the ribosome.

One of the early assembly proteins it binds 23S rRNA. One of the proteins that surrounds the polypeptide exit tunnel on the outside of the ribosome. Forms the main docking site for trigger factor binding to the ribosome. In Nitrobacter winogradskyi (strain ATCC 25391 / DSM 10237 / CIP 104748 / NCIMB 11846 / Nb-255), this protein is Large ribosomal subunit protein uL23.